Consider the following 758-residue polypeptide: MNQTISSRAPQKRLAPRLLCVMIGAALGTLSASSWAAAATDSTAENAKKTSATAATAKAEDSKTNDTITVVGAQETFRAGGNDLIPTYLDGQVANGGRIGFLGQQDARNVPFNVIGYTSKMIEDQQANSIADVVKNDASVQNVRGYGNPSQNYRIRGYNLDGDDISFGGLFGVLPRQIVSTSMVERVEVFKGANAFINGISPSGSGVGGMINLEPKRAGDTPLTRVTVDYGSASQVGGALDVGRRYGDDDQFGVRVNVLHREGESAIHDQKERTTAVSTGLDYRGDRARTSLDVGYQKQTIHHMRTDVAIGGATVIPEPPSSTLNYGQSWVYTDMETTFGMLRSEYDVSQNWTVYGSVGASRNEETGQYGAPMLTNNNGDATISRLYVPYVADSVAGLGGIRGHFDTGPITHKVNLGYAANYRTTKSAWNMSGQEDTNIYNPGVIGFPQTVMGSDSQDPQLTSQVRASGLSLSDTLSMMDDKVSLMLGVRRQEVTIRNFDSGVPNSAGSLDAMKVTPIYGIMVKPWEKVSLYANHIEALGPGKSAPYQYNGKPVVNAGQIPGIIHSKQNEIGVKFDNQRYGGTLALFEITRPTGMVDPATNVYGFYGEQRNRGIELNVFGEPVFGTRLLASATWLDPKLTKAADSANNGNDAVGVANYQLVFGGEYDIPVVEGLTATGTVVRSGSQYANEANTLKLKPWTRLDLGVRYTMPMKDTSLTWRANIENVTNERYWESVEDSGTYIYQGDPRALKLSVSMDF.

The signal sequence occupies residues 1-36 (MNQTISSRAPQKRLAPRLLCVMIGAALGTLSASSWA). The short motif at 66 to 73 (DTITVVGA) is the TonB box element. The region spanning 106–216 (DARNVPFNVI…VGGMINLEPK (111 aa)) is the TBDR plug domain. Positions 221–758 (TPLTRVTVDY…ALKLSVSMDF (538 aa)) constitute a TBDR beta-barrel domain. Residues 741 to 758 (YIYQGDPRALKLSVSMDF) carry the TonB C-terminal box motif.

Belongs to the TonB-dependent receptor family.

Its subcellular location is the cell outer membrane. Functionally, receptor for the hydroxamate siderophore, ferrichrome. Binds also to most other ferrichrome derivatives except enantio ferrichrome and ferric rhodotorulate. In Yersinia enterocolitica, this protein is Ferrichrome receptor FcuA (fcuA).